The following is a 306-amino-acid chain: Putative dihydroorotate dehydrogenase A (fumarate) (306 aa).

Residues Ser20 and 44–45 (KG) contribute to the FMN site. Substrate-binding positions include Lys44 and 68–72 (NSIGL). The FMN site is built by Asn98 and Asn126. Asn126 is a substrate binding site. Cys129 (nucleophile) is an active-site residue. FMN contacts are provided by Lys164 and Ile190. Position 191–192 (191–192 (NT)) interacts with substrate. FMN is bound by residues Gly216, 244-245 (GG), and 266-267 (GT).

The protein belongs to the dihydroorotate dehydrogenase family. Type 1 subfamily. In terms of assembly, homodimer. FMN is required as a cofactor.

It localises to the cytoplasm. It carries out the reaction (S)-dihydroorotate + fumarate = orotate + succinate. Its pathway is pyrimidine metabolism; UMP biosynthesis via de novo pathway. Catalyzes the conversion of dihydroorotate to orotate with fumarate as the electron acceptor. The sequence is that of Putative dihydroorotate dehydrogenase A (fumarate) (pyrD) from Aquifex aeolicus (strain VF5).